Reading from the N-terminus, the 98-residue chain is Large ribosomal subunit protein uL23 (98 aa).

It belongs to the universal ribosomal protein uL23 family. In terms of assembly, part of the 50S ribosomal subunit. Contacts protein L29, and trigger factor when it is bound to the ribosome.

Functionally, one of the early assembly proteins it binds 23S rRNA. One of the proteins that surrounds the polypeptide exit tunnel on the outside of the ribosome. Forms the main docking site for trigger factor binding to the ribosome. This is Large ribosomal subunit protein uL23 from Bordetella avium (strain 197N).